A 76-amino-acid chain; its full sequence is Large ribosomal subunit protein uL29 (76 aa).

It belongs to the universal ribosomal protein uL29 family.

In Corynebacterium aurimucosum (strain ATCC 700975 / DSM 44827 / CIP 107346 / CN-1) (Corynebacterium nigricans), this protein is Large ribosomal subunit protein uL29.